Consider the following 393-residue polypeptide: Bifunctional enzyme IspD/IspF (393 aa).

The 2-C-methyl-D-erythritol 4-phosphate cytidylyltransferase stretch occupies residues 1–234 (MTTSQRTAAI…ARLAASLGDI (234 aa)). The tract at residues 235-393 (RTGTGYDVHA…SATIRLPWGA (159 aa)) is 2-C-methyl-D-erythritol 2,4-cyclodiphosphate synthase. 2 residues coordinate a divalent metal cation: Asp-241 and His-243. 4-CDP-2-C-methyl-D-erythritol 2-phosphate contacts are provided by residues 241 to 243 (DVH) and 267 to 268 (HS). His-275 is a binding site for a divalent metal cation. 4-CDP-2-C-methyl-D-erythritol 2-phosphate contacts are provided by residues 289–291 (DIG), 365–368 (TTSE), Phe-372, and Arg-375.

The protein in the N-terminal section; belongs to the IspD/TarI cytidylyltransferase family. IspD subfamily. In the C-terminal section; belongs to the IspF family. The cofactor is a divalent metal cation.

The catalysed reaction is 2-C-methyl-D-erythritol 4-phosphate + CTP + H(+) = 4-CDP-2-C-methyl-D-erythritol + diphosphate. It carries out the reaction 4-CDP-2-C-methyl-D-erythritol 2-phosphate = 2-C-methyl-D-erythritol 2,4-cyclic diphosphate + CMP. It functions in the pathway isoprenoid biosynthesis; isopentenyl diphosphate biosynthesis via DXP pathway; isopentenyl diphosphate from 1-deoxy-D-xylulose 5-phosphate: step 2/6. Its pathway is isoprenoid biosynthesis; isopentenyl diphosphate biosynthesis via DXP pathway; isopentenyl diphosphate from 1-deoxy-D-xylulose 5-phosphate: step 4/6. Functionally, bifunctional enzyme that catalyzes the formation of 4-diphosphocytidyl-2-C-methyl-D-erythritol from CTP and 2-C-methyl-D-erythritol 4-phosphate (MEP) (IspD), and catalyzes the conversion of 4-diphosphocytidyl-2-C-methyl-D-erythritol 2-phosphate (CDP-ME2P) to 2-C-methyl-D-erythritol 2,4-cyclodiphosphate (ME-CPP) with a corresponding release of cytidine 5-monophosphate (CMP) (IspF). The chain is Bifunctional enzyme IspD/IspF from Bradyrhizobium sp. (strain ORS 278).